A 148-amino-acid polypeptide reads, in one-letter code: MSYRFLTVRAFGFTGFHCDATRLLSETEVIDVPSSLDFVGETELRLETAWPQCEENCYTILPRFNVQVDFEYYPVRVEIVCRVCAASLSVIFSKWDFYCSRRGHFVPVDQNGDLFRIGTLQETGEKYFYFCDKSICRQCIIQAAHHHS.

Functionally, transports viral genome to neighboring plant cells directly through plasmosdesmata, without any budding. The movement protein allows efficient cell to cell propagation, by bypassing the host cell wall barrier (Potential). Likely acts as a suppressor of RNA-mediated gene silencing, also known as post-transcriptional gene silencing (PTGS), a mechanism of plant viral defense that performs sequence-specific inhibition of viral mRNAs expression. This Glycine max (Soybean) protein is Movement protein P1.